The primary structure comprises 298 residues: Leucine-rich repeat-containing protein 55 (298 aa).

An N-terminal signal peptide occupies residues methionine 1 to alanine 34. The 31-residue stretch at glycine 35–methionine 65 folds into the LRRNT domain. 2 disulfide bridges follow: cysteine 38–cysteine 44 and cysteine 42–cysteine 51. LRR repeat units follow at residues aspartate 66–cysteine 87, glutamate 90–histidine 111, arginine 114–glutamate 135, glycine 138–glycine 160, and histidine 163–proline 186. Residues asparagine 196–leucine 251 form the LRRCT domain. Disulfide bonds link cysteine 200–cysteine 227 and cysteine 202–cysteine 249. Residues leucine 259–leucine 279 form a helical membrane-spanning segment.

In terms of assembly, interacts with KCNMA1.

Its subcellular location is the cell membrane. Its function is as follows. Auxiliary protein of the large-conductance, voltage and calcium-activated potassium channel (BK alpha). Modulates gating properties by producing a marked shift in the BK channel's voltage dependence of activation in the hyperpolarizing direction, and in the absence of calcium. The polypeptide is Leucine-rich repeat-containing protein 55 (Lrrc55) (Mus musculus (Mouse)).